Reading from the N-terminus, the 350-residue chain is Protein FAM118B (350 aa).

N-acetylalanine is present on alanine 2. Serine 9 bears the Phosphoserine mark.

It belongs to the FAM118 family.

The protein localises to the nucleus. It localises to the cajal body. Functionally, may play a role in Cajal bodies formation. The chain is Protein FAM118B (FAM118B) from Macaca fascicularis (Crab-eating macaque).